The chain runs to 161 residues: Putative pre-16S rRNA nuclease (161 aa).

Belongs to the YqgF nuclease family.

The protein localises to the cytoplasm. Functionally, could be a nuclease involved in processing of the 5'-end of pre-16S rRNA. This is Putative pre-16S rRNA nuclease from Bradyrhizobium sp. (strain ORS 278).